A 399-amino-acid polypeptide reads, in one-letter code: Nicotinate phosphoribosyltransferase 1 (399 aa).

H224 carries the phosphohistidine; by autocatalysis modification.

This sequence belongs to the NAPRTase family. Transiently phosphorylated on a His residue during the reaction cycle. Phosphorylation strongly increases the affinity for substrates and increases the rate of nicotinate D-ribonucleotide production. Dephosphorylation regenerates the low-affinity form of the enzyme, leading to product release.

It carries out the reaction nicotinate + 5-phospho-alpha-D-ribose 1-diphosphate + ATP + H2O = nicotinate beta-D-ribonucleotide + ADP + phosphate + diphosphate. It participates in cofactor biosynthesis; NAD(+) biosynthesis; nicotinate D-ribonucleotide from nicotinate: step 1/1. In terms of biological role, catalyzes the synthesis of beta-nicotinate D-ribonucleotide from nicotinate and 5-phospho-D-ribose 1-phosphate at the expense of ATP. The sequence is that of Nicotinate phosphoribosyltransferase 1 from Pseudomonas aeruginosa (strain ATCC 15692 / DSM 22644 / CIP 104116 / JCM 14847 / LMG 12228 / 1C / PRS 101 / PAO1).